The primary structure comprises 833 residues: Leucine--tRNA ligase (833 aa).

Residues 41–52 (PYPSGAGLHVGH) carry the 'HIGH' region motif. The short motif at 610–614 (KMSKS) is the 'KMSKS' region element. K613 serves as a coordination point for ATP.

The protein belongs to the class-I aminoacyl-tRNA synthetase family.

Its subcellular location is the cytoplasm. The catalysed reaction is tRNA(Leu) + L-leucine + ATP = L-leucyl-tRNA(Leu) + AMP + diphosphate. The chain is Leucine--tRNA ligase from Streptococcus gordonii (strain Challis / ATCC 35105 / BCRC 15272 / CH1 / DL1 / V288).